The chain runs to 541 residues: Putative apolipoprotein N-acyltransferase (541 aa).

A run of 6 helical transmembrane segments spans residues 31–51 (PLPA…AAHA), 65–85 (GWLF…VSMH), 89–109 (GLAA…LALF), 144–164 (AACW…FPWL), 181–201 (LLGV…LAGL), and 215–235 (LAAG…QFSW). The region spanning 248–511 (VQGNVEQSQK…AGVLPVAVQG (264 aa)) is the CN hydrolase domain. E292 functions as the Proton acceptor in the catalytic mechanism. K366 is an active-site residue. C416 functions as the Nucleophile in the catalytic mechanism.

It belongs to the CN hydrolase family. Apolipoprotein N-acyltransferase subfamily.

The protein resides in the cell inner membrane. The enzyme catalyses N-terminal S-1,2-diacyl-sn-glyceryl-L-cysteinyl-[lipoprotein] + a glycerophospholipid = N-acyl-S-1,2-diacyl-sn-glyceryl-L-cysteinyl-[lipoprotein] + a 2-acyl-sn-glycero-3-phospholipid + H(+). The protein operates within protein modification; lipoprotein biosynthesis (N-acyl transfer). Its function is as follows. Catalyzes the phospholipid dependent N-acylation of the N-terminal cysteine of apolipoprotein, the last step in lipoprotein maturation. The chain is Putative apolipoprotein N-acyltransferase from Bordetella parapertussis (strain 12822 / ATCC BAA-587 / NCTC 13253).